The chain runs to 278 residues: Ankyrin repeat and SOCS box protein 13 (278 aa).

ANK repeat units lie at residues 18–47 (VERT…CVNQ), 51–80 (DSIT…QVDA), 84–113 (DGST…KVNP), 116–145 (YTAS…NLEA), 149–178 (HFGT…NVNA), and 181–210 (LHET…NIYA). In terms of domain architecture, SOCS box spans 229-278 (AKCFEYYEKTPLSLSQLCRVSLRKATGVRGLEKVAKLNIPPRLIDYLSYN).

Belongs to the ankyrin SOCS box (ASB) family.

It participates in protein modification; protein ubiquitination. In terms of biological role, may be a substrate-recognition component of a SCF-like ECS (Elongin-Cullin-SOCS-box protein) E3 ubiquitin-protein ligase complex which mediates the ubiquitination and subsequent proteasomal degradation of target proteins. The chain is Ankyrin repeat and SOCS box protein 13 (Asb13) from Mus musculus (Mouse).